Here is a 372-residue protein sequence, read N- to C-terminus: Glutamate 5-kinase (372 aa).

Position 14 (Lys-14) interacts with ATP. 3 residues coordinate substrate: Ser-54, Asp-141, and Asn-153. 173–174 (TD) contacts ATP. A PUA domain is found at 280–358 (RGTLTLDEGA…DEIEKLLGYV (79 aa)).

This sequence belongs to the glutamate 5-kinase family.

The protein localises to the cytoplasm. The catalysed reaction is L-glutamate + ATP = L-glutamyl 5-phosphate + ADP. The protein operates within amino-acid biosynthesis; L-proline biosynthesis; L-glutamate 5-semialdehyde from L-glutamate: step 1/2. Functionally, catalyzes the transfer of a phosphate group to glutamate to form L-glutamate 5-phosphate. In Stutzerimonas stutzeri (strain A1501) (Pseudomonas stutzeri), this protein is Glutamate 5-kinase.